A 465-amino-acid chain; its full sequence is Apolipoprotein N-acyltransferase (465 aa).

The next 6 helical transmembrane spans lie at A12–L32, A49–L69, L80–L100, L122–I142, W161–L181, and C189–P209. The 228-residue stretch at W221–R448 folds into the CN hydrolase domain. Catalysis depends on E262, which acts as the Proton acceptor. K312 is an active-site residue. Residue C360 is the Nucleophile of the active site.

It belongs to the CN hydrolase family. Apolipoprotein N-acyltransferase subfamily.

Its subcellular location is the cell inner membrane. The enzyme catalyses N-terminal S-1,2-diacyl-sn-glyceryl-L-cysteinyl-[lipoprotein] + a glycerophospholipid = N-acyl-S-1,2-diacyl-sn-glyceryl-L-cysteinyl-[lipoprotein] + a 2-acyl-sn-glycero-3-phospholipid + H(+). It functions in the pathway protein modification; lipoprotein biosynthesis (N-acyl transfer). Catalyzes the phospholipid dependent N-acylation of the N-terminal cysteine of apolipoprotein, the last step in lipoprotein maturation. The polypeptide is Apolipoprotein N-acyltransferase (Parasynechococcus marenigrum (strain WH8102)).